The chain runs to 225 residues: Thymidylate kinase (225 aa).

10-17 (GVEGGGKT) serves as a coordination point for ATP.

The protein belongs to the thymidylate kinase family.

It catalyses the reaction dTMP + ATP = dTDP + ADP. Its function is as follows. Phosphorylation of dTMP to form dTDP in both de novo and salvage pathways of dTTP synthesis. The protein is Thymidylate kinase of Trichodesmium erythraeum (strain IMS101).